Consider the following 235-residue polypeptide: Ubiquinone/menaquinone biosynthesis C-methyltransferase UbiE (235 aa).

S-adenosyl-L-methionine is bound by residues Thr60, Asp80, Asp106–Val107, and Ser123.

This sequence belongs to the class I-like SAM-binding methyltransferase superfamily. MenG/UbiE family.

It catalyses the reaction a 2-demethylmenaquinol + S-adenosyl-L-methionine = a menaquinol + S-adenosyl-L-homocysteine + H(+). The enzyme catalyses a 2-methoxy-6-(all-trans-polyprenyl)benzene-1,4-diol + S-adenosyl-L-methionine = a 5-methoxy-2-methyl-3-(all-trans-polyprenyl)benzene-1,4-diol + S-adenosyl-L-homocysteine + H(+). Its pathway is quinol/quinone metabolism; menaquinone biosynthesis; menaquinol from 1,4-dihydroxy-2-naphthoate: step 2/2. It functions in the pathway cofactor biosynthesis; ubiquinone biosynthesis. Functionally, methyltransferase required for the conversion of demethylmenaquinol (DMKH2) to menaquinol (MKH2) and the conversion of 2-polyprenyl-6-methoxy-1,4-benzoquinol (DDMQH2) to 2-polyprenyl-3-methyl-6-methoxy-1,4-benzoquinol (DMQH2). The sequence is that of Ubiquinone/menaquinone biosynthesis C-methyltransferase UbiE from Bdellovibrio bacteriovorus (strain ATCC 15356 / DSM 50701 / NCIMB 9529 / HD100).